The chain runs to 769 residues: MRQTISTMAASSKTNMMQIMRGCICYTTVYRIWTNKNRTEGLTALCYLLFRNTCGQYSAQYSTVNLSGKSMAKLWGLNPDMITDTMLAGMTNSASVTGLWPSCPSDQHMLWKALLTTTLAKLRHRLGYHAYYTPVTIYIDSQTGLVTACEPVSGERSIPRPGLLKTDGMISVEESCLISTAMKHAEGAPLAHIKLSALKRTRQIPEFDMRIEIQTKEERFLREYKKVNSPYKKFKCDNNSNTIFKVVDNTLVLDHLQPPVRALSLVPTSFDCLVTTPAEFSLVALLATYAKWHEKLYSCDNESTNILVPILMYIGPETNPRGEDVDYSCIIGFPGWPIVKSSTANQTAIKDAIDAYVDTDGLWPLAGPRTFHLLAPWSPENHPFPMIDTSHILSVHSTDIRHKAADEWTTGRITCILRDPTLIENAAIAKFDFSAFFATLYLGLFPTHSRLHDVVKARLKREKPWLKRPILEFGGLLKKLNEDVYQSIISIGNHISIEVEATASSLMFAPCTYIKDGMWGTFMDKSKNVPRPPMDDERDFNILRNACAESANNFAATIGLQFPDEILLDLRLEGIYTHAMSWNANCYWLWNKSNHHKDFVGFPNQPRFASYAKHGLSTLLEKICISNDTDESLQTVREKTHEVFEELLSIAFDHRSDVSFWSCPTELYDDTQYIAALGMKAAARFDTSGFNRETVQTVTADGKIVSVTCSLFEGEIILPAIDCIDYMKPILAAFSRLLINVLSSKWDNVNRDDFTFDIESYRFMFINNK.

It belongs to the herpesviridae HEPA family. As to quaternary structure, associates with the primase and the helicase to form the helicase-primase complex. Interacts with the origin-binding protein. Interacts with the polymerase catalytic subunit.

The protein localises to the host nucleus. Component of the helicase/primase complex. Unwinds the DNA at the replication forks and generates single-stranded DNA for both leading and lagging strand synthesis. The primase synthesizes short RNA primers on the lagging strand that the polymerase presumably elongates using dNTPs. The primase-associated factor has no known catalytic activity in the complex and may serve to facilitate the formation of the replisome by directly interacting with the origin-binding protein and the polymerase. The polypeptide is DNA helicase/primase complex-associated protein (MDV020) (Gallus gallus (Chicken)).